A 360-amino-acid polypeptide reads, in one-letter code: Phospho-N-acetylmuramoyl-pentapeptide-transferase (360 aa).

Helical transmembrane passes span 20–40 (YITF…FFFG), 71–91 (TPTM…LLWA), 93–113 (LDNG…AIGF), 134–154 (LLIG…LHPA), 168–188 (ALIN…LGAA), 199–219 (GLAI…AYMV), 239–259 (LAVF…YNAP), 263–283 (VFMG…IAVV), 288–308 (IVLA…IIQV), and 337–357 (QIVI…LATL).

It belongs to the glycosyltransferase 4 family. MraY subfamily. It depends on Mg(2+) as a cofactor.

The protein localises to the cell inner membrane. It carries out the reaction UDP-N-acetyl-alpha-D-muramoyl-L-alanyl-gamma-D-glutamyl-meso-2,6-diaminopimeloyl-D-alanyl-D-alanine + di-trans,octa-cis-undecaprenyl phosphate = di-trans,octa-cis-undecaprenyl diphospho-N-acetyl-alpha-D-muramoyl-L-alanyl-D-glutamyl-meso-2,6-diaminopimeloyl-D-alanyl-D-alanine + UMP. It participates in cell wall biogenesis; peptidoglycan biosynthesis. Catalyzes the initial step of the lipid cycle reactions in the biosynthesis of the cell wall peptidoglycan: transfers peptidoglycan precursor phospho-MurNAc-pentapeptide from UDP-MurNAc-pentapeptide onto the lipid carrier undecaprenyl phosphate, yielding undecaprenyl-pyrophosphoryl-MurNAc-pentapeptide, known as lipid I. This is Phospho-N-acetylmuramoyl-pentapeptide-transferase from Paracoccus denitrificans (strain Pd 1222).